A 239-amino-acid polypeptide reads, in one-letter code: Purine nucleoside phosphorylase DeoD-type (239 aa).

H5 contributes to the a purine D-ribonucleoside binding site. Phosphate is bound by residues G21, R25, R44, and 88–91; that span reads RVGS. A purine D-ribonucleoside-binding positions include 180-182 and 204-205; these read EME and SD. D205 acts as the Proton donor in catalysis.

The protein belongs to the PNP/UDP phosphorylase family. In terms of assembly, homohexamer; trimer of homodimers.

It carries out the reaction a purine D-ribonucleoside + phosphate = a purine nucleobase + alpha-D-ribose 1-phosphate. The catalysed reaction is a purine 2'-deoxy-D-ribonucleoside + phosphate = a purine nucleobase + 2-deoxy-alpha-D-ribose 1-phosphate. Catalyzes the reversible phosphorolytic breakdown of the N-glycosidic bond in the beta-(deoxy)ribonucleoside molecules, with the formation of the corresponding free purine bases and pentose-1-phosphate. This Erwinia tasmaniensis (strain DSM 17950 / CFBP 7177 / CIP 109463 / NCPPB 4357 / Et1/99) protein is Purine nucleoside phosphorylase DeoD-type.